The sequence spans 260 residues: Acetylglutamate kinase (260 aa).

Substrate-binding positions include 46–47 (GG), Arg68, and Asn160.

This sequence belongs to the acetylglutamate kinase family. ArgB subfamily.

Its subcellular location is the cytoplasm. The catalysed reaction is N-acetyl-L-glutamate + ATP = N-acetyl-L-glutamyl 5-phosphate + ADP. Its pathway is amino-acid biosynthesis; L-arginine biosynthesis; N(2)-acetyl-L-ornithine from L-glutamate: step 2/4. Catalyzes the ATP-dependent phosphorylation of N-acetyl-L-glutamate. The sequence is that of Acetylglutamate kinase from Shewanella sp. (strain MR-7).